The chain runs to 248 residues: Probable transcriptional regulatory protein Bind_0345 (248 aa).

It belongs to the TACO1 family.

The protein localises to the cytoplasm. In Beijerinckia indica subsp. indica (strain ATCC 9039 / DSM 1715 / NCIMB 8712), this protein is Probable transcriptional regulatory protein Bind_0345.